Consider the following 213-residue polypeptide: Probable elongation factor 1-beta/1-delta 1 (213 aa).

The protein belongs to the EF-1-beta/EF-1-delta family. In terms of assembly, EF-1 is composed of 4 subunits: alpha, beta, delta, and gamma.

In terms of biological role, EF-1-beta and EF-1-delta stimulate the exchange of GDP bound to EF-1-alpha to GTP. The protein is Probable elongation factor 1-beta/1-delta 1 (eef-1B.1) of Caenorhabditis elegans.